Here is a 305-residue protein sequence, read N- to C-terminus: DNA-directed RNA polymerase 35 kDa subunit (305 aa).

Belongs to the poxviridae DNA-directed RNA polymerase 35 kDa subunit family. As to quaternary structure, the DNA-dependent RNA polymerase used for intermediate and late genes expression consists of eight subunits 147 kDa, 133 kDa, 35 kDa, 30 kDa, 22 kDa, 19 kDa, 18 kDa and 7 kDa totalling more than 500 kDa in mass. The same holoenzyme, with the addition of the transcription-specificity factor RAP94, is used for early gene expression.

The protein resides in the virion. It catalyses the reaction RNA(n) + a ribonucleoside 5'-triphosphate = RNA(n+1) + diphosphate. Part of the DNA-dependent RNA polymerase which catalyzes the transcription of viral DNA into RNA using the four ribonucleoside triphosphates as substrates. Responsible for the transcription of early, intermediate and late genes. DNA-dependent RNA polymerase associates with the early transcription factor (ETF), itself composed of D6 and A7, thereby allowing the early genes transcription. Late transcription, and probably also intermediate transcription, require newly synthesized RNA polymerase. This chain is DNA-directed RNA polymerase 35 kDa subunit (OPG156), found in Homo sapiens (Human).